A 325-amino-acid chain; its full sequence is Tetraacyldisaccharide 4'-kinase (325 aa).

Residue 58–65 (TVGGSGKT) participates in ATP binding.

The protein belongs to the LpxK family.

The enzyme catalyses a lipid A disaccharide + ATP = a lipid IVA + ADP + H(+). It participates in glycolipid biosynthesis; lipid IV(A) biosynthesis; lipid IV(A) from (3R)-3-hydroxytetradecanoyl-[acyl-carrier-protein] and UDP-N-acetyl-alpha-D-glucosamine: step 6/6. Functionally, transfers the gamma-phosphate of ATP to the 4'-position of a tetraacyldisaccharide 1-phosphate intermediate (termed DS-1-P) to form tetraacyldisaccharide 1,4'-bis-phosphate (lipid IVA). The chain is Tetraacyldisaccharide 4'-kinase from Coxiella burnetii (strain RSA 331 / Henzerling II).